Reading from the N-terminus, the 137-residue chain is Protein BNS1 (137 aa).

Component of the FEAR (CDC14 early anaphase release) network which promotes CDC14 release from the nucleolus during early anaphase and is required for the efficient segregation of telomeric and nucleolar regions. Although BNS1 can partially compensate for a lack of SPO12 function when overexpressed, it does not appear to play any role in controlling meiotic nuclear division. In Saccharomyces cerevisiae (strain ATCC 204508 / S288c) (Baker's yeast), this protein is Protein BNS1 (BNS1).